We begin with the raw amino-acid sequence, 217 residues long: Putative 8-oxo-dGTP diphosphatase 3 (217 aa).

A Nudix hydrolase domain is found at 30-164 (GRYGAAGLLL…PGFAASWQRL (135 aa)). The segment at 67–92 (LPGGARDSHETPEQTAVRESSEEAGL) is disordered. Mg(2+) is bound by residues glycine 70, glutamate 85, glutamate 88, and glutamate 89. The short motif at 70-91 (GARDSHETPEQTAVRESSEEAG) is the Nudix box element.

It belongs to the Nudix hydrolase family. It depends on Mg(2+) as a cofactor. Requires Mn(2+) as cofactor.

It catalyses the reaction 8-oxo-dGTP + H2O = 8-oxo-dGMP + diphosphate + H(+). In terms of biological role, may be involved in the GO system responsible for removing an oxidatively damaged form of guanine (7,8-dihydro-8-oxoguanine, 8-oxo-dGTP) from DNA and the nucleotide pool. 8-oxo-dGTP is inserted opposite dA and dC residues of template DNA with almost equal efficiency thus leading to A.T to G.C transversions. MutT specifically degrades 8-oxo-dGTP to the monophosphate. The sequence is that of Putative 8-oxo-dGTP diphosphatase 3 (mutT3) from Mycobacterium tuberculosis (strain CDC 1551 / Oshkosh).